Reading from the N-terminus, the 589-residue chain is Probable ATP-dependent RNA helicase DDX59 (589 aa).

2 disordered regions span residues 1-36 (MFVP…QLEG) and 48-98 (KEAV…SKTQ). A compositionally biased stretch (basic and acidic residues) spans 12-27 (NSNDDLKSCEAKKSKP). Lysine 26 participates in a covalent cross-link: Glycyl lysine isopeptide (Lys-Gly) (interchain with G-Cter in SUMO2). Serine 64 is subject to Phosphoserine. Over residues 80 to 91 (GVKDSHPSEEPV) the composition is skewed to basic and acidic residues. Residues 104–133 (GEPVCVVCGRYGEYICDKTDEDVCSLECKA) form an HIT-type zinc finger. Phosphoserine is present on residues serine 156 and serine 160. The Q motif signature appears at 203 to 231 (IDFEHCGFPETLNQNLKKSGYEVPTPIQM). The 142-residue stretch at 234–375 (IPVGLLGRDI…DQLLHNPVRI (142 aa)) folds into the Helicase ATP-binding domain. 247–254 (ADTGSGKT) lines the ATP pocket. Residues 323–326 (VKAD) carry the DEAD box motif. The Helicase C-terminal domain occupies 399–549 (KKKKLFEILN…ILPPQLLNSP (151 aa)).

This sequence belongs to the DEAD box helicase family. DDX59 subfamily. In terms of assembly, interacts (via HIT-type zinc finger) with the RUVBL1/RUVBL2 complex in the presence of ADP.

The protein localises to the cytoplasm. The protein resides in the nucleus. The catalysed reaction is ATP + H2O = ADP + phosphate + H(+). This chain is Probable ATP-dependent RNA helicase DDX59 (Ddx59), found in Rattus norvegicus (Rat).